Reading from the N-terminus, the 642-residue chain is Threonine--tRNA ligase (642 aa).

Positions 1 to 61 (MPIITLPDGS…EEDASLEIIT (61 aa)) constitute a TGS domain. Residues 244–535 (DHRKIGKQLD…LIEEYAGFFP (292 aa)) are catalytic. Residues Cys335, His386, and His512 each contribute to the Zn(2+) site.

It belongs to the class-II aminoacyl-tRNA synthetase family. As to quaternary structure, homodimer. It depends on Zn(2+) as a cofactor.

It localises to the cytoplasm. It catalyses the reaction tRNA(Thr) + L-threonine + ATP = L-threonyl-tRNA(Thr) + AMP + diphosphate + H(+). Functionally, catalyzes the attachment of threonine to tRNA(Thr) in a two-step reaction: L-threonine is first activated by ATP to form Thr-AMP and then transferred to the acceptor end of tRNA(Thr). Also edits incorrectly charged L-seryl-tRNA(Thr). This is Threonine--tRNA ligase from Vibrio parahaemolyticus serotype O3:K6 (strain RIMD 2210633).